Reading from the N-terminus, the 193-residue chain is Large ribosomal subunit protein bL12cy (193 aa).

A chloroplast-targeting transit peptide spans 1–59 (MAATTLSIATTIRSSSFSSGLASAHHFPSRPLSIEFPFSFGVSSSSTLSHRAIYLHPIS). Positions 170 to 187 (GVTKDEAEEDKTQLEEAG) are enriched in basic and acidic residues. Residues 170 to 193 (GVTKDEAEEDKTQLEEAGAKVSIV) are disordered.

This sequence belongs to the bacterial ribosomal protein bL12 family.

It is found in the plastid. It localises to the chloroplast. This is Large ribosomal subunit protein bL12cy (RPL12B) from Arabidopsis thaliana (Mouse-ear cress).